A 208-amino-acid chain; its full sequence is Uracil phosphoribosyltransferase (208 aa).

5-phospho-alpha-D-ribose 1-diphosphate is bound by residues R78, R103, and 130 to 138 (DPMLATGGS). Residues I193 and 198-200 (GDA) each bind uracil. Residue D199 coordinates 5-phospho-alpha-D-ribose 1-diphosphate.

The protein belongs to the UPRTase family. The cofactor is Mg(2+).

It carries out the reaction UMP + diphosphate = 5-phospho-alpha-D-ribose 1-diphosphate + uracil. It functions in the pathway pyrimidine metabolism; UMP biosynthesis via salvage pathway; UMP from uracil: step 1/1. Allosterically activated by GTP. Catalyzes the conversion of uracil and 5-phospho-alpha-D-ribose 1-diphosphate (PRPP) to UMP and diphosphate. In Desulfovibrio desulfuricans (strain ATCC 27774 / DSM 6949 / MB), this protein is Uracil phosphoribosyltransferase.